The chain runs to 550 residues: MTPADLATLIKETAVEVLTSRELDTSVLPEQVVVERPRNPEHGDYATNIALQVAKKVGQNPRDLATWLAEALAADDAIDSAEIAGPGFLNIRLAAAAQGEIVAKILAQGETFGNSDHLSHLDVNLEFVSANPTGPIHLGGTRWAAVGDSLGRVLEASGAKVTREYYFNDHGRQIDRFALSLLAAAKGEPTPEDGYGGEYIKEIAEAIVEKHPEALALEPAATQELFRAEGVEMMFEHIKSSLHEFGTDFDVYYHENSLFESGAVDKAVQVLKDNGNLYENEGAWWLRSTEFGDDKDRVVIKSDGDAAYIAGDIAYVADKFSRGHNLNIYMLGADHHGYIARLKAAAAALGYKPEGVEVLIGQMVNLLRDGKAVRMSKRAGTVVTLDDLVEAIGIDAARYSLIRSSVDSSLDIDLGLWESQSSDNPVYYVQYGHARLCSIARKAETLGVTEEGADLSLLTHDREGDLIRTLGEFPAVVKAAADLREPHRIARYAEELAGTFHRFYDSCHILPKVDEDTAPIHTARLALAAATRQTLANALHLVGVSAPEKM.

The short motif at 130-140 (ANPTGPIHLGG) is the 'HIGH' region element.

Belongs to the class-I aminoacyl-tRNA synthetase family. In terms of assembly, monomer.

It localises to the cytoplasm. The catalysed reaction is tRNA(Arg) + L-arginine + ATP = L-arginyl-tRNA(Arg) + AMP + diphosphate. The polypeptide is Arginine--tRNA ligase (argS) (Corynebacterium glutamicum (strain ATCC 13032 / DSM 20300 / JCM 1318 / BCRC 11384 / CCUG 27702 / LMG 3730 / NBRC 12168 / NCIMB 10025 / NRRL B-2784 / 534)).